The following is an 85-amino-acid chain: UPF0386 protein Arad_1912 (85 aa).

Belongs to the UPF0386 family.

This is UPF0386 protein Arad_1912 from Rhizobium rhizogenes (strain K84 / ATCC BAA-868) (Agrobacterium radiobacter).